A 188-amino-acid chain; its full sequence is Elongation factor P (188 aa).

This sequence belongs to the elongation factor P family.

The protein resides in the cytoplasm. Its pathway is protein biosynthesis; polypeptide chain elongation. Involved in peptide bond synthesis. Stimulates efficient translation and peptide-bond synthesis on native or reconstituted 70S ribosomes in vitro. Probably functions indirectly by altering the affinity of the ribosome for aminoacyl-tRNA, thus increasing their reactivity as acceptors for peptidyl transferase. The chain is Elongation factor P from Leptospira interrogans serogroup Icterohaemorrhagiae serovar copenhageni (strain Fiocruz L1-130).